We begin with the raw amino-acid sequence, 709 residues long: MEKTFNLTRREDGIAILTMDVPGETMNTLKAEFGPEISEILSEIKRDSSIRGLVLISGKKDSFVAGADISMLDACQTAGDAKALSQQGHVVFNELEALNIPVVAAIHGACLGGGLELALACHQRVCSDDGKTMLGVPEVQLGLLPGGGGTQRLPRLVGITTALDMMLTGKQIRPKQALKMGLVNDVVPQTILLQTAVEMALAGKRTAKPVKKSLVNQLLEGTGFGRNIIFDQAAKQVAKKTQGNYPAPAKIIDCVRQGMAKGMQKGLEVEASHFAELVVSKESEALRSIFFATTEMKKETGAEGATPRKVKKAVILGGGLMGGGIASVTTTKAKIPARVKDINEKGLSNALSYAYKLLDKGVKRRHMTPAVRDNLMALMTTTTEYKGVKDADIVVEAVFEDLALKHQMVKDIERECGEHTIFASNTSSLPIGQIAQAASRPENVIGLHYFSPVEKMPLVEVIAHAKTSPETIATTVAFARKQGKTPIVVQDGAGFYVNRILALYMNEAAQLLLEGQSIEHLDKALVKFGFPVGPITLLDEVGIDVGAKIAPILETELGERFKAPAAFDKLLSDDRKGRKNGKGFYQYAAGNKASSKKKVVDESVYGVLGIKPGIDKEMSAVAERCVVQMLNEAVRCLDDGIIASPRDGDIGAIFGIGFPPFLGGPFHYIDTLGADNLVKILERYQAQYGDRFEPCPRLKEMAAEKTRFF.

The segment at 1–188 is enoyl-CoA hydratase; it reads MEKTFNLTRR…KMGLVNDVVP (188 aa). The interval 308 to 709 is 3-hydroxyacyl-CoA dehydrogenase; sequence RKVKKAVILG…EMAAEKTRFF (402 aa).

This sequence in the N-terminal section; belongs to the enoyl-CoA hydratase/isomerase family. In the central section; belongs to the 3-hydroxyacyl-CoA dehydrogenase family. In terms of assembly, heterotetramer of two alpha chains (FadJ) and two beta chains (FadI).

It localises to the cytoplasm. The enzyme catalyses a (3S)-3-hydroxyacyl-CoA = a (2E)-enoyl-CoA + H2O. It catalyses the reaction a 4-saturated-(3S)-3-hydroxyacyl-CoA = a (3E)-enoyl-CoA + H2O. The catalysed reaction is a (3S)-3-hydroxyacyl-CoA + NAD(+) = a 3-oxoacyl-CoA + NADH + H(+). It carries out the reaction (3S)-3-hydroxybutanoyl-CoA = (3R)-3-hydroxybutanoyl-CoA. It participates in lipid metabolism; fatty acid beta-oxidation. Its function is as follows. Catalyzes the formation of a hydroxyacyl-CoA by addition of water on enoyl-CoA. Also exhibits 3-hydroxyacyl-CoA epimerase and 3-hydroxyacyl-CoA dehydrogenase activities. In Shewanella sp. (strain MR-7), this protein is Fatty acid oxidation complex subunit alpha.